The following is a 137-amino-acid chain: Peptide methionine sulfoxide reductase MsrB (137 aa).

The region spanning 7–129 is the MsrB domain; sequence AEELKKKLSE…NSASLAFSDE (123 aa). 4 residues coordinate Zn(2+): Cys-46, Cys-49, Cys-95, and Cys-98. The Nucleophile role is filled by Cys-118.

This sequence belongs to the MsrB Met sulfoxide reductase family. It depends on Zn(2+) as a cofactor.

The catalysed reaction is L-methionyl-[protein] + [thioredoxin]-disulfide + H2O = L-methionyl-(R)-S-oxide-[protein] + [thioredoxin]-dithiol. This chain is Peptide methionine sulfoxide reductase MsrB, found in Salmonella arizonae (strain ATCC BAA-731 / CDC346-86 / RSK2980).